A 257-amino-acid chain; its full sequence is Uxu operon transcriptional regulator (257 aa).

The HTH gntR-type domain maps to 8 to 76 (QRPYQEVGAM…RGAGIYVLDN (69 aa)). Positions 36 to 55 (EREIAEMLDVTRTVVREALI) form a DNA-binding region, H-T-H motif.

Its function is as follows. Repressor for the uxuRBA operon. The chain is Uxu operon transcriptional regulator (uxuR) from Escherichia coli (strain K12).